The following is a 536-amino-acid chain: Probable serine/threonine-protein kinase DDB_G0268550 (536 aa).

The 292-residue stretch at 14-305 folds into the Protein kinase domain; that stretch reads EIIEKNYRKG…IDVLEIHPFL (292 aa). Residues 20–28 and Lys-51 contribute to the ATP site; that span reads YRKGGFSKI. Asp-147 functions as the Proton acceptor in the catalytic mechanism. The segment at 161 to 192 is disordered; it reads DNNNNNNNNNNNNNNNNNNNSNINDDNNNSNS.

The protein belongs to the protein kinase superfamily. Ser/Thr protein kinase family. Mg(2+) serves as cofactor.

The enzyme catalyses L-seryl-[protein] + ATP = O-phospho-L-seryl-[protein] + ADP + H(+). The catalysed reaction is L-threonyl-[protein] + ATP = O-phospho-L-threonyl-[protein] + ADP + H(+). This chain is Probable serine/threonine-protein kinase DDB_G0268550, found in Dictyostelium discoideum (Social amoeba).